The primary structure comprises 278 residues: HTH-type transcriptional activator RhaS (278 aa).

The HTH araC/xylS-type domain maps to 174-272 (NLLLAWLEDH…NWSPRDIRQG (99 aa)). 2 DNA-binding regions (H-T-H motif) span residues 191 to 212 (DAVADQFSLSLRTLHRQLKQQT) and 239 to 262 (VTDIAYRCGFSDSNHFSTLFRREF).

In terms of assembly, binds DNA as a dimer.

Its subcellular location is the cytoplasm. In terms of biological role, activates expression of the rhaBAD and rhaT operons. In Shigella boydii serotype 4 (strain Sb227), this protein is HTH-type transcriptional activator RhaS.